Reading from the N-terminus, the 249-residue chain is Ubiquinone biosynthesis O-methyltransferase (249 aa).

The segment at 1–21 is disordered; the sequence is MIPEVSNEASQPAAHRQENVD. S-adenosyl-L-methionine-binding residues include Arg52, Gly72, Asp93, and Met137.

This sequence belongs to the methyltransferase superfamily. UbiG/COQ3 family.

It catalyses the reaction a 3-demethylubiquinol + S-adenosyl-L-methionine = a ubiquinol + S-adenosyl-L-homocysteine + H(+). It carries out the reaction a 3-(all-trans-polyprenyl)benzene-1,2-diol + S-adenosyl-L-methionine = a 2-methoxy-6-(all-trans-polyprenyl)phenol + S-adenosyl-L-homocysteine + H(+). It functions in the pathway cofactor biosynthesis; ubiquinone biosynthesis. Functionally, O-methyltransferase that catalyzes the 2 O-methylation steps in the ubiquinone biosynthetic pathway. The protein is Ubiquinone biosynthesis O-methyltransferase of Sodalis glossinidius (strain morsitans).